A 252-amino-acid polypeptide reads, in one-letter code: 4-formylbenzenesulfonate dehydrogenase TsaC1/TsaC2 (252 aa).

NAD(+)-binding positions include 9 to 36 and aspartate 62; that span reads IVTG…LVAD. Serine 142 contributes to the substrate binding site. Tyrosine 155 functions as the Proton acceptor in the catalytic mechanism. Lysine 159 lines the NAD(+) pocket.

This sequence belongs to the short-chain dehydrogenases/reductases (SDR) family. As to quaternary structure, homodimer.

It catalyses the reaction 4-formylbenzenesulfonate + NAD(+) + H2O = 4-sulfobenzoate + NADH + 2 H(+). Its function is as follows. Involved in the toluene-4-sulfonate degradation pathway. Does not discriminate between the sulfonate and the carboxyl substituents and can also be involved in the p-toluenecarboxylate degradation pathway. The chain is 4-formylbenzenesulfonate dehydrogenase TsaC1/TsaC2 (tsaC1) from Comamonas testosteroni (Pseudomonas testosteroni).